Here is a 339-residue protein sequence, read N- to C-terminus: Glycerol-3-phosphate dehydrogenase [NAD(P)+] (339 aa).

Residues Ser-15, Tyr-16, His-36, and Lys-110 each contribute to the NADPH site. Residues Lys-110, Gly-139, and Thr-141 each coordinate sn-glycerol 3-phosphate. Ala-143 serves as a coordination point for NADPH. Positions 195, 248, 258, 259, and 260 each coordinate sn-glycerol 3-phosphate. Lys-195 (proton acceptor) is an active-site residue. Position 259 (Arg-259) interacts with NADPH. NADPH-binding residues include Val-283 and Glu-285.

The protein belongs to the NAD-dependent glycerol-3-phosphate dehydrogenase family.

The protein resides in the cytoplasm. It catalyses the reaction sn-glycerol 3-phosphate + NAD(+) = dihydroxyacetone phosphate + NADH + H(+). The enzyme catalyses sn-glycerol 3-phosphate + NADP(+) = dihydroxyacetone phosphate + NADPH + H(+). It participates in membrane lipid metabolism; glycerophospholipid metabolism. In terms of biological role, catalyzes the reduction of the glycolytic intermediate dihydroxyacetone phosphate (DHAP) to sn-glycerol 3-phosphate (G3P), the key precursor for phospholipid synthesis. This is Glycerol-3-phosphate dehydrogenase [NAD(P)+] from Klebsiella pneumoniae (strain 342).